The following is a 90-amino-acid chain: U7-theraphotoxin-Hhn1b (90 aa).

The first 19 residues, 1–19 (MKTAIFTVVLALAVFAVLS), serve as a signal peptide directing secretion. Positions 20–50 (FGWEANEKALSEEFTELIHEKEAASETEARE) are excised as a propeptide. 3 cysteine pairs are disulfide-bonded: cysteine 51/cysteine 65, cysteine 58/cysteine 70, and cysteine 64/cysteine 81.

Belongs to the neurotoxin 10 (Hwtx-1) family. 13 (Hntx-13) subfamily. Expressed by the venom gland.

It localises to the secreted. Its function is as follows. Ion channel inhibitor. In Cyriopagopus hainanus (Chinese bird spider), this protein is U7-theraphotoxin-Hhn1b.